Reading from the N-terminus, the 272-residue chain is 3-methyl-2-oxobutanoate hydroxymethyltransferase (272 aa).

Positions 53 and 92 each coordinate Mg(2+). 3-methyl-2-oxobutanoate is bound by residues aspartate 53 to serine 54, aspartate 92, and lysine 120. Position 122 (glutamate 122) interacts with Mg(2+). Glutamate 189 (proton acceptor) is an active-site residue.

It belongs to the PanB family. Homodecamer; pentamer of dimers. The cofactor is Mg(2+).

It localises to the cytoplasm. It carries out the reaction 3-methyl-2-oxobutanoate + (6R)-5,10-methylene-5,6,7,8-tetrahydrofolate + H2O = 2-dehydropantoate + (6S)-5,6,7,8-tetrahydrofolate. The protein operates within cofactor biosynthesis; (R)-pantothenate biosynthesis; (R)-pantoate from 3-methyl-2-oxobutanoate: step 1/2. Catalyzes the reversible reaction in which hydroxymethyl group from 5,10-methylenetetrahydrofolate is transferred onto alpha-ketoisovalerate to form ketopantoate. The chain is 3-methyl-2-oxobutanoate hydroxymethyltransferase from Ralstonia pickettii (strain 12J).